The primary structure comprises 103 residues: Small ribosomal subunit protein uS10 (103 aa).

It belongs to the universal ribosomal protein uS10 family. In terms of assembly, part of the 30S ribosomal subunit.

Functionally, involved in the binding of tRNA to the ribosomes. The polypeptide is Small ribosomal subunit protein uS10 (Xanthomonas campestris pv. campestris (strain B100)).